The following is a 336-amino-acid chain: MRHDWTRDEVEALISLPFPELMYRAQTLHRRYFDPTKVQISTLLSIKTGGCPEDCAYCPQSALHEKSVKAERLMAVESVIKEARAAKKAGAGRFCMGAAWRTPKDHDLDTVCEMIEGVKSLGLETCVTLGMLDAQQTERLKKAGLDYYNHNLDTSEEFYGSIISTRTYQQRLDTLSNVRDAGINVCCGGIVGMGEDLSDRAGLLMTLANLPKHPESVPINLLVRVEGTPLGEAEAVDPITFVRIIATARIMMPESHVRLAAGRENMTDEAHALCFLAGANSIFCGEKLLTTPNPAEHRDRQLLSALGMSPMVQSEAEMGTMRPAVTEDAVCEMAVS.

One can recognise a Radical SAM core domain in the interval 36-263 (TKVQISTLLS…ESHVRLAAGR (228 aa)). Positions 51, 55, and 58 each coordinate [4Fe-4S] cluster. [2Fe-2S] cluster-binding residues include Cys95, Cys126, Cys186, and Arg258.

The protein belongs to the radical SAM superfamily. Biotin synthase family. As to quaternary structure, homodimer. It depends on [4Fe-4S] cluster as a cofactor. [2Fe-2S] cluster serves as cofactor.

The catalysed reaction is (4R,5S)-dethiobiotin + (sulfur carrier)-SH + 2 reduced [2Fe-2S]-[ferredoxin] + 2 S-adenosyl-L-methionine = (sulfur carrier)-H + biotin + 2 5'-deoxyadenosine + 2 L-methionine + 2 oxidized [2Fe-2S]-[ferredoxin]. It participates in cofactor biosynthesis; biotin biosynthesis; biotin from 7,8-diaminononanoate: step 2/2. In terms of biological role, catalyzes the conversion of dethiobiotin (DTB) to biotin by the insertion of a sulfur atom into dethiobiotin via a radical-based mechanism. The chain is Biotin synthase from Gluconobacter oxydans (strain 621H) (Gluconobacter suboxydans).